A 393-amino-acid polypeptide reads, in one-letter code: N-acyl-phosphatidylethanolamine-hydrolyzing phospholipase D (393 aa).

The residue at position 1 (methionine 1) is an N-acetylmethionine. Polar residues predominate over residues 1 to 16 (MDENESNQSLMTSSQY). Residues 1-40 (MDENESNQSLMTSSQYPKEAVRKRQNSARNSGGSDSSRFS) form a disordered region. The Zn(2+) site is built by histidine 185 and histidine 187. Tyrosine 188 is a binding site for an N-acyl-1,2-diacyl-sn-glycero-3-phosphoethanolamine. Positions 189, 190, and 253 each coordinate Zn(2+). Deoxycholate is bound by residues lysine 256 and methionine 260. Aspartate 284 contacts Zn(2+). Histidine 321 is an an N-acyl-1,2-diacyl-sn-glycero-3-phosphoethanolamine binding site. Position 343 (histidine 343) interacts with Zn(2+). Residue alanine 348 coordinates deoxycholate.

It belongs to the NAPE-PLD family. In terms of assembly, homodimer. Bile acids promote the assembly of inactive monomers into an active dimer and enable catalysis. The cofactor is Zn(2+). In terms of tissue distribution, widely expressed. Highest expression in brain, kidney and testis (at protein level). Expressed in adipose tissue (at protein level).

The protein localises to the golgi apparatus membrane. It localises to the early endosome membrane. Its subcellular location is the nucleus envelope. The protein resides in the nucleus. It is found in the nucleoplasm. The catalysed reaction is an N-acyl-1,2-diacyl-sn-glycero-3-phosphoethanolamine + H2O = an N-acylethanolamine + a 1,2-diacyl-sn-glycero-3-phosphate + H(+). It carries out the reaction N-butanoyl-1-hexadecanoyl-2-(9Z,12Z-octadecadienoyl)-sn-glycero-3-phosphoethanolamine + H2O = N-butanoyl ethanolamine + 1-hexadecanoyl-2-(9Z,12Z-octadecadienoyl)-sn-glycero-3-phosphate + H(+). The enzyme catalyses N-hexanoyl-1-hexadecanoyl-2-(9Z,12Z-octadecadienoyl)-sn-glycero-3-phosphoethanolamine + H2O = N-hexanoyl ethanolamine + 1-hexadecanoyl-2-(9Z,12Z-octadecadienoyl)-sn-glycero-3-phosphate + H(+). It catalyses the reaction N-octanoyl-1-hexadecanoyl-2-(9Z,12Z-octadecadienoyl)-sn-glycero-3-phosphoethanolamine + H2O = N-octanoyl ethanolamine + 1-hexadecanoyl-2-(9Z,12Z-octadecadienoyl)-sn-glycero-3-phosphate + H(+). The catalysed reaction is N-decanoyl-1-hexadecanoyl-2-(9Z,12Z-octadecadienoyl)-sn-glycero-3-phosphoethanolamine + H2O = N-decanoyl ethanolamine + 1-hexadecanoyl-2-(9Z,12Z-octadecadienoyl)-sn-glycero-3-phosphate + H(+). It carries out the reaction N-dodecanoyl-1,2-di-(9Z-octadecenoyl)-sn-glycero-3-phosphoethanolamine + H2O = N-dodecanoylethanolamine + 1,2-di-(9Z-octadecenoyl)-sn-glycero-3-phosphate + H(+). The enzyme catalyses N-tetradecanoyl-1,2-di-(9Z-octadecenoyl)-sn-glycero-3-phosphoethanolamine + H2O = N-tetradecanoylethanolamine + 1,2-di-(9Z-octadecenoyl)-sn-glycero-3-phosphate + H(+). It catalyses the reaction N-hexadecanoyl-1,2-di-(9Z-octadecenoyl)-sn-glycero-3-phosphoethanolamine + H2O = N-hexadecanoylethanolamine + 1,2-di-(9Z-octadecenoyl)-sn-glycero-3-phosphate + H(+). The catalysed reaction is N,1-dihexadecanoyl-2-(9Z,12Z-octadecadienoyl)-sn-glycero-3-phosphoethanolamine + H2O = 1-hexadecanoyl-2-(9Z,12Z-octadecadienoyl)-sn-glycero-3-phosphate + N-hexadecanoylethanolamine + H(+). It carries out the reaction N-octadecanoyl-1,2-di-(9Z-octadecenoyl)-sn-glycero-3-phosphoethanolamine + H2O = N-octadecanoyl ethanolamine + 1,2-di-(9Z-octadecenoyl)-sn-glycero-3-phosphate + H(+). The enzyme catalyses N,1,2-tri-(9Z-octadecenoyl)-sn-glycero-3-phosphoethanolamine + H2O = N-(9Z-octadecenoyl) ethanolamine + 1,2-di-(9Z-octadecenoyl)-sn-glycero-3-phosphate + H(+). It catalyses the reaction N-(5Z,8Z,11Z,14Z-eicosatetraenoyl)-1,2-diacyl-sn-glycero-3-phosphoethanolamine + H2O = N-(5Z,8Z,11Z,14Z-eicosatetraenoyl)-ethanolamine + a 1,2-diacyl-sn-glycero-3-phosphate + H(+). The catalysed reaction is N-(5Z,8Z,11Z,14Z-eicosatetraenoyl)-1,2-di-(9Z-octadecenoyl)-sn-glycero-3-phosphoethanolamine + H2O = N-(5Z,8Z,11Z,14Z-eicosatetraenoyl)-ethanolamine + 1,2-di-(9Z-octadecenoyl)-sn-glycero-3-phosphate + H(+). It carries out the reaction 1-O-(1Z-octadecenoyl)-2-(9Z-octadecenoyl)-sn-glycero-3-phospho-N-hexadecanoyl-ethanolamine + H2O = 1-O-(1Z-octadecenoyl)-2-(9Z-octadecenoyl)-sn-glycero-3-phosphate + N-hexadecanoylethanolamine + H(+). The enzyme catalyses N,1-diacyl-sn-glycero-3-phosphoethanolamine + H2O = an N-acylethanolamine + a 1-acyl-sn-glycero-3-phosphate + H(+). It catalyses the reaction N,1-dihexadecanoyl-sn-glycero-3-phosphoethanolamine + H2O = N-hexadecanoylethanolamine + 1-hexadecanoyl-sn-glycero-3-phosphate + H(+). The catalysed reaction is N-(5Z,8Z,11Z,14Z-eicosatetraenoyl)-1-(9Z-octadecenoyl)-sn-glycero-3-phosphoethanolamine + H2O = N-(5Z,8Z,11Z,14Z-eicosatetraenoyl)-ethanolamine + 1-(9Z-octadecenoyl)-sn-glycero-3-phosphate + H(+). Activated by divalent cations. Activated by bile acids. Its function is as follows. D-type phospholipase that hydrolyzes N-acyl-phosphatidylethanolamines (NAPEs) to produce bioactive N-acylethanolamines/fatty acid ethanolamides (NAEs/FAEs) and phosphatidic acid. Cleaves the terminal phosphodiester bond of diacyl- and alkenylacyl-NAPEs, primarily playing a role in the generation of long-chain saturated and monounsaturated NAEs in the brain. May control NAPE homeostasis in dopaminergic neuron membranes and regulate neuron survival, partly through RAC1 activation. As a regulator of lipid metabolism in the adipose tissue, mediates the crosstalk between adipocytes, gut microbiota and immune cells to control body temperature and weight. In particular, regulates energy homeostasis by promoting cold-induced brown or beige adipocyte differentiation program to generate heat from fatty acids and glucose. Has limited D-type phospholipase activity toward N-acyl lyso-NAPEs. This Pongo abelii (Sumatran orangutan) protein is N-acyl-phosphatidylethanolamine-hydrolyzing phospholipase D (NAPEPLD).